Reading from the N-terminus, the 260-residue chain is MGYLKGFALYISILILIVFIAGCGKSDKTKEDSKEAQIKKSFEKTLDMYPIKNLEDLYDKEGYRDGEFKKGDKGTWTLLTSFAKSNKPGEIDDEGMVLFLNRNIKKATGYYYTSKVHDEFNEKEHQKKYHVELKNNKIVLLDNVEDSKLKNKIENFKFFSQYADFRDFKNYKNGNISSADNVPSFDAEYQISNTDKNVKKLREVYPITTKKSPVLKLHIDGDIKGSSIGYKNIEFNFSKVKDEETAVRDFVNFGPSDGVS.

An N-terminal signal peptide occupies residues 1–22; sequence MGYLKGFALYISILILIVFIAG. C23 is lipidated: N-palmitoyl cysteine. C23 carries the S-diacylglycerol cysteine lipid modification.

It belongs to the staphylococcal tandem lipoprotein family.

It localises to the cell membrane. This is an uncharacterized protein from Staphylococcus aureus (strain MSSA476).